The sequence spans 379 residues: Protein COS4 (379 aa).

4 consecutive transmembrane segments (helical) span residues Ile43–Trp63, Ile70–Ile90, Ile233–Arg253, and Met255–Phe275.

This sequence belongs to the DUP/COS family.

It is found in the membrane. The protein is Protein COS4 (COS4) of Saccharomyces cerevisiae (strain ATCC 204508 / S288c) (Baker's yeast).